The sequence spans 270 residues: Formamidopyrimidine-DNA glycosylase (270 aa).

Pro2 acts as the Schiff-base intermediate with DNA in catalysis. Glu3 acts as the Proton donor in catalysis. Lys58 acts as the Proton donor; for beta-elimination activity in catalysis. Residues His91, Arg110, and Arg151 each coordinate DNA. An FPG-type zinc finger spans residues 236–270; the sequence is FAYGRAGEFCKVCGTTLREVKLGQRASVYCPRCQR. Catalysis depends on Arg260, which acts as the Proton donor; for delta-elimination activity.

It belongs to the FPG family. Monomer. Zn(2+) serves as cofactor.

The enzyme catalyses Hydrolysis of DNA containing ring-opened 7-methylguanine residues, releasing 2,6-diamino-4-hydroxy-5-(N-methyl)formamidopyrimidine.. It catalyses the reaction 2'-deoxyribonucleotide-(2'-deoxyribose 5'-phosphate)-2'-deoxyribonucleotide-DNA = a 3'-end 2'-deoxyribonucleotide-(2,3-dehydro-2,3-deoxyribose 5'-phosphate)-DNA + a 5'-end 5'-phospho-2'-deoxyribonucleoside-DNA + H(+). Its function is as follows. Involved in base excision repair of DNA damaged by oxidation or by mutagenic agents. Acts as a DNA glycosylase that recognizes and removes damaged bases. Has a preference for oxidized purines, such as 7,8-dihydro-8-oxoguanine (8-oxoG). Has AP (apurinic/apyrimidinic) lyase activity and introduces nicks in the DNA strand. Cleaves the DNA backbone by beta-delta elimination to generate a single-strand break at the site of the removed base with both 3'- and 5'-phosphates. The chain is Formamidopyrimidine-DNA glycosylase from Ectopseudomonas mendocina (strain ymp) (Pseudomonas mendocina).